Reading from the N-terminus, the 716-residue chain is UvrABC system protein C (716 aa).

A GIY-YIG domain is found at 14–94; it reads AEPGCYLMKD…IKRHRPRFNI (81 aa). The UVR domain occupies 206–241; sequence TELVERLHGRMDEAADALRFEDAARLRDQLQAVERS.

Belongs to the UvrC family. In terms of assembly, interacts with UvrB in an incision complex.

It is found in the cytoplasm. The UvrABC repair system catalyzes the recognition and processing of DNA lesions. UvrC both incises the 5' and 3' sides of the lesion. The N-terminal half is responsible for the 3' incision and the C-terminal half is responsible for the 5' incision. This Anaeromyxobacter sp. (strain Fw109-5) protein is UvrABC system protein C.